The following is a 381-amino-acid chain: Tryptophan--tRNA ligase (381 aa).

A 'HIGH' region motif is present at residues 82 to 90 (PSLGMHIGH). The 'KMSKS' region motif lies at 254 to 258 (KMSSS).

Belongs to the class-I aminoacyl-tRNA synthetase family.

It localises to the cytoplasm. The catalysed reaction is tRNA(Trp) + L-tryptophan + ATP = L-tryptophyl-tRNA(Trp) + AMP + diphosphate + H(+). This Sulfurisphaera tokodaii (strain DSM 16993 / JCM 10545 / NBRC 100140 / 7) (Sulfolobus tokodaii) protein is Tryptophan--tRNA ligase.